A 130-amino-acid polypeptide reads, in one-letter code: Small ribosomal subunit protein uS11 (130 aa).

Positions 1-15 are enriched in basic residues; that stretch reads MARPTKKSGPRKQKR. Residues 1–21 are disordered; sequence MARPTKKSGPRKQKRNVPSGV.

It belongs to the universal ribosomal protein uS11 family. As to quaternary structure, part of the 30S ribosomal subunit. Interacts with proteins S7 and S18. Binds to IF-3.

In terms of biological role, located on the platform of the 30S subunit, it bridges several disparate RNA helices of the 16S rRNA. Forms part of the Shine-Dalgarno cleft in the 70S ribosome. The chain is Small ribosomal subunit protein uS11 from Synechococcus elongatus (strain ATCC 33912 / PCC 7942 / FACHB-805) (Anacystis nidulans R2).